The sequence spans 667 residues: Long-chain-fatty-acid--CoA ligase ACSBG2 (667 aa).

Residues 227–235 (TSGTTGTPK), 418–423 (EIYGMS), aspartate 496, arginine 511, and arginine 624 contribute to the ATP site.

It belongs to the ATP-dependent AMP-binding enzyme family. Bubblegum subfamily. Testis- and brainstem-specific. Expressed in pubertal and adult testis. Enriched in germ cells and Sertoli cells while present at a lower level in Leydig cells. Present in testicular Sertoli cells and large motoneurons in the medulla oblongata and cervical spinal cord (at protein level).

It localises to the cytoplasm. Its subcellular location is the membrane. The catalysed reaction is a long-chain fatty acid + ATP + CoA = a long-chain fatty acyl-CoA + AMP + diphosphate. It catalyses the reaction (5Z,8Z,11Z,14Z)-eicosatetraenoate + ATP + CoA = (5Z,8Z,11Z,14Z)-eicosatetraenoyl-CoA + AMP + diphosphate. The enzyme catalyses hexadecanoate + ATP + CoA = hexadecanoyl-CoA + AMP + diphosphate. It carries out the reaction (9Z)-octadecenoate + ATP + CoA = (9Z)-octadecenoyl-CoA + AMP + diphosphate. The catalysed reaction is (9Z,12Z)-octadecadienoate + ATP + CoA = (9Z,12Z)-octadecadienoyl-CoA + AMP + diphosphate. It catalyses the reaction tetracosanoate + ATP + CoA = tetracosanoyl-CoA + AMP + diphosphate. Functionally, catalyzes the conversion of fatty acids such as long chain and very long-chain fatty acids to their active form acyl-CoAs for both synthesis of cellular lipids, and degradation via beta-oxidation. Can activate diverse saturated, monosaturated and polyunsaturated fatty acids. Has increased ability to activate oleic and linoleic acid. May play a role in spermatogenesis. This chain is Long-chain-fatty-acid--CoA ligase ACSBG2, found in Mus musculus (Mouse).